A 170-amino-acid polypeptide reads, in one-letter code: Urease accessory protein UreE (170 aa).

Belongs to the UreE family.

The protein localises to the cytoplasm. In terms of biological role, involved in urease metallocenter assembly. Binds nickel. Probably functions as a nickel donor during metallocenter assembly. The sequence is that of Urease accessory protein UreE from Helicobacter pylori (strain ATCC 700392 / 26695) (Campylobacter pylori).